A 243-amino-acid chain; its full sequence is Homeobox protein goosecoid isoform A (243 aa).

A DNA-binding region (homeobox) is located at residues lysine 148 to lysine 207. The segment at alanine 201–serine 243 is disordered. Positions alanine 217–asparagine 226 are enriched in polar residues. A compositionally biased stretch (basic and acidic residues) spans serine 227 to serine 243.

This sequence belongs to the paired homeobox family. Bicoid subfamily. At the start of gastrulation, it is found in a patch of cells encompassing 60 degrees of arc on the dorsal marginal zone.

It localises to the nucleus. In terms of biological role, plays a central role in executing Spemann's organizer phenomenon (the dorsal blastopore lip of the early Xenopus laevis gastrula can organize a complete secondary body axis when transplanted to another embryo). The polypeptide is Homeobox protein goosecoid isoform A (gsc-a) (Xenopus laevis (African clawed frog)).